The following is a 283-amino-acid chain: Phosphatidylserine decarboxylase proenzyme (283 aa).

Active-site charge relay system; for autoendoproteolytic cleavage activity residues include Asp90, His143, and Ser248. Ser248 acts as the Schiff-base intermediate with substrate; via pyruvic acid; for decarboxylase activity in catalysis. Ser248 carries the post-translational modification Pyruvic acid (Ser); by autocatalysis.

This sequence belongs to the phosphatidylserine decarboxylase family. PSD-B subfamily. Prokaryotic type I sub-subfamily. As to quaternary structure, heterodimer of a large membrane-associated beta subunit and a small pyruvoyl-containing alpha subunit. It depends on pyruvate as a cofactor. Is synthesized initially as an inactive proenzyme. Formation of the active enzyme involves a self-maturation process in which the active site pyruvoyl group is generated from an internal serine residue via an autocatalytic post-translational modification. Two non-identical subunits are generated from the proenzyme in this reaction, and the pyruvate is formed at the N-terminus of the alpha chain, which is derived from the carboxyl end of the proenzyme. The autoendoproteolytic cleavage occurs by a canonical serine protease mechanism, in which the side chain hydroxyl group of the serine supplies its oxygen atom to form the C-terminus of the beta chain, while the remainder of the serine residue undergoes an oxidative deamination to produce ammonia and the pyruvoyl prosthetic group on the alpha chain. During this reaction, the Ser that is part of the protease active site of the proenzyme becomes the pyruvoyl prosthetic group, which constitutes an essential element of the active site of the mature decarboxylase.

It localises to the cell membrane. The enzyme catalyses a 1,2-diacyl-sn-glycero-3-phospho-L-serine + H(+) = a 1,2-diacyl-sn-glycero-3-phosphoethanolamine + CO2. It participates in phospholipid metabolism; phosphatidylethanolamine biosynthesis; phosphatidylethanolamine from CDP-diacylglycerol: step 2/2. Catalyzes the formation of phosphatidylethanolamine (PtdEtn) from phosphatidylserine (PtdSer). The protein is Phosphatidylserine decarboxylase proenzyme of Francisella tularensis subsp. holarctica (strain OSU18).